A 144-amino-acid chain; its full sequence is Large ribosomal subunit protein uL16 (144 aa).

This sequence belongs to the universal ribosomal protein uL16 family. As to quaternary structure, part of the 50S ribosomal subunit.

Its function is as follows. Binds 23S rRNA and is also seen to make contacts with the A and possibly P site tRNAs. In Novosphingobium aromaticivorans (strain ATCC 700278 / DSM 12444 / CCUG 56034 / CIP 105152 / NBRC 16084 / F199), this protein is Large ribosomal subunit protein uL16.